Consider the following 220-residue polypeptide: Thioredoxin domain-containing protein (220 aa).

A signal peptide spans 1–19 (MKFLILNCLILFSLISSEA). In terms of domain architecture, Thioredoxin spans 20–141 (TNVKLDREDQ…SEFALGDFKN (122 aa)). The Lumenal portion of the chain corresponds to 20–181 (TNVKLDREDQ…YDAALAGFVT (162 aa)). Cysteines 64 and 67 form a disulfide. Residues 182–202 (ISSFSFLFGLLVGLMLSLFLF) traverse the membrane as a helical segment. Over 203 to 220 (TRRATRKPKVLTERKKDK) the chain is Cytoplasmic. A Di-lysine motif motif is present at residues 217–220 (KKDK).

Belongs to the protein disulfide isomerase family.

The protein resides in the endoplasmic reticulum membrane. The chain is Thioredoxin domain-containing protein from Theileria parva (East coast fever infection agent).